The chain runs to 180 residues: MFPMVTGFMNYGQQTVRAARYIGQSLMITLSHANRLPVTIQYPYEKVITSERFRGRIHFEFDKCIACEVCVRVCPIDLPVVDWKLETNIRKKRLLNYSIDFGICIFCGNCVEYCPTNCLSMTEEYELSAYDRHELNYNQIALGRLPMSVIGDYTIRTITNSTQTEIATGKRFDSKTITNY.

2 consecutive 4Fe-4S ferredoxin-type domains span residues 55 to 84 and 95 to 124; these read GRIH…VDWK and LNYS…MTEE. Positions 64, 67, 70, 74, 104, 107, 110, and 114 each coordinate [4Fe-4S] cluster.

Belongs to the complex I 23 kDa subunit family. NDH is composed of at least 16 different subunits, 5 of which are encoded in the nucleus. The cofactor is [4Fe-4S] cluster.

The protein localises to the plastid. It localises to the chloroplast thylakoid membrane. It catalyses the reaction a plastoquinone + NADH + (n+1) H(+)(in) = a plastoquinol + NAD(+) + n H(+)(out). It carries out the reaction a plastoquinone + NADPH + (n+1) H(+)(in) = a plastoquinol + NADP(+) + n H(+)(out). Functionally, NDH shuttles electrons from NAD(P)H:plastoquinone, via FMN and iron-sulfur (Fe-S) centers, to quinones in the photosynthetic chain and possibly in a chloroplast respiratory chain. The immediate electron acceptor for the enzyme in this species is believed to be plastoquinone. Couples the redox reaction to proton translocation, and thus conserves the redox energy in a proton gradient. The chain is NAD(P)H-quinone oxidoreductase subunit I, chloroplastic from Ranunculus macranthus (Large buttercup).